The following is a 687-amino-acid chain: DNA ligase (687 aa).

Residues 34–38 (DAEYD), 83–84 (SL), and Glu-117 contribute to the NAD(+) site. The active-site N6-AMP-lysine intermediate is the Lys-119. NAD(+)-binding residues include Arg-140, Glu-182, Lys-298, and Lys-322. Residues Cys-416, Cys-419, Cys-434, and Cys-439 each coordinate Zn(2+). Residues 609-687 (EARGPFAGKT…EEEFVRLLKE (79 aa)) form the BRCT domain.

The protein belongs to the NAD-dependent DNA ligase family. LigA subfamily. Mg(2+) serves as cofactor. It depends on Mn(2+) as a cofactor.

It carries out the reaction NAD(+) + (deoxyribonucleotide)n-3'-hydroxyl + 5'-phospho-(deoxyribonucleotide)m = (deoxyribonucleotide)n+m + AMP + beta-nicotinamide D-nucleotide.. In terms of biological role, DNA ligase that catalyzes the formation of phosphodiester linkages between 5'-phosphoryl and 3'-hydroxyl groups in double-stranded DNA using NAD as a coenzyme and as the energy source for the reaction. It is essential for DNA replication and repair of damaged DNA. The chain is DNA ligase from Anaeromyxobacter dehalogenans (strain 2CP-1 / ATCC BAA-258).